The chain runs to 464 residues: Glycine--tRNA ligase (464 aa).

2 residues coordinate substrate: R104 and E175. ATP is bound by residues 207 to 209, 217 to 222, 292 to 293, and 336 to 339; these read RNE, FRTREF, EL, and GVNR. 222-226 is a binding site for substrate; it reads FEQME. 332-336 is a binding site for substrate; it reads EPALG.

The protein belongs to the class-II aminoacyl-tRNA synthetase family. In terms of assembly, homodimer.

The protein resides in the cytoplasm. It catalyses the reaction tRNA(Gly) + glycine + ATP = glycyl-tRNA(Gly) + AMP + diphosphate. Its function is as follows. Catalyzes the attachment of glycine to tRNA(Gly). This is Glycine--tRNA ligase from Leptospira interrogans serogroup Icterohaemorrhagiae serovar copenhageni (strain Fiocruz L1-130).